The sequence spans 89 residues: Small ribosomal subunit protein uS15 (89 aa).

It belongs to the universal ribosomal protein uS15 family. In terms of assembly, part of the 30S ribosomal subunit. Forms a bridge to the 50S subunit in the 70S ribosome, contacting the 23S rRNA.

In terms of biological role, one of the primary rRNA binding proteins, it binds directly to 16S rRNA where it helps nucleate assembly of the platform of the 30S subunit by binding and bridging several RNA helices of the 16S rRNA. Its function is as follows. Forms an intersubunit bridge (bridge B4) with the 23S rRNA of the 50S subunit in the ribosome. The chain is Small ribosomal subunit protein uS15 from Nitrosospira multiformis (strain ATCC 25196 / NCIMB 11849 / C 71).